The following is a 238-amino-acid chain: Orotidine 5'-phosphate decarboxylase (238 aa).

Residues Asp-10, Lys-32, 59-68 (DLKLHDIPNT), Thr-122, Arg-184, Gln-193, Gly-213, and Arg-214 contribute to the substrate site. Residue Lys-61 is the Proton donor of the active site.

Belongs to the OMP decarboxylase family. Type 1 subfamily. Homodimer.

It carries out the reaction orotidine 5'-phosphate + H(+) = UMP + CO2. It functions in the pathway pyrimidine metabolism; UMP biosynthesis via de novo pathway; UMP from orotate: step 2/2. Functionally, catalyzes the decarboxylation of orotidine 5'-monophosphate (OMP) to uridine 5'-monophosphate (UMP). The polypeptide is Orotidine 5'-phosphate decarboxylase (Bacillus cereus (strain Q1)).